The primary structure comprises 223 residues: Kinetochore protein Spc25 (223 aa).

Positions 51–119 (RHQRKVGKLQ…NEIMERIQTL (69 aa)) form a coiled coil.

Belongs to the SPC25 family. Component of the Ndc80 complex, which is composed of Ndc80, Nuf2 and Spc25.

It is found in the nucleus. The protein resides in the chromosome. The protein localises to the centromere. It localises to the kinetochore. Acts as a component of the essential kinetochore-associated Ndc80 complex, which is required for chromosome segregation and spindle checkpoint activity during meiosis and mitosis. Required for kinetochore integrity and the organization of stable microtubule binding sites in the outer plate of the kinetochore. Participates in SAC signaling that responds specifically to disruptions in spindle microtubule dynamics. The NDC80 complex synergistically enhances the affinity of the SKA1 complex for microtubules and may allow the NDC80 complex to track depolymerizing microtubules. In Drosophila teissieri (Fruit fly), this protein is Kinetochore protein Spc25.